The chain runs to 125 residues: Protein MGF 360-9L (125 aa).

This sequence belongs to the asfivirus MGF 360 family. In terms of assembly, interacts with host STAT1; this interaction mediates STAT1 degradation through apoptosis. Interacts with host STAT2; this interaction mediates STAT2 degradation through the proteasome.

It is found in the host cytoplasm. Its function is as follows. Plays a role in virus cell tropism, and may be required for efficient virus replication in macrophages. In addition, inhibits IFN-beta-induced IFN-stimulated genes (ISGs) transcription. Mechanistically, degrades host STAT1 and STAT2 through apoptosis and ubiquitin-proteasome pathways respectively. The chain is Protein MGF 360-9L from African swine fever virus (strain Badajoz 1971 Vero-adapted) (Ba71V).